The primary structure comprises 346 residues: Galactitol 1-phosphate 5-dehydrogenase (346 aa).

Zn(2+)-binding residues include Cys38, His59, Cys89, Cys92, Cys95, Cys103, and Glu144.

The protein belongs to the zinc-containing alcohol dehydrogenase family. It depends on Zn(2+) as a cofactor.

The enzyme catalyses galactitol 1-phosphate + NAD(+) = keto-D-tagatose 6-phosphate + NADH + H(+). Functionally, converts galactitol 1-phosphate to tagatose 6-phosphate. The polypeptide is Galactitol 1-phosphate 5-dehydrogenase (gatD) (Escherichia coli O157:H7).